The primary structure comprises 937 residues: CAP-Gly domain-containing linker protein 1 homolog (937 aa).

The 43-residue stretch at 39–81 folds into the CAP-Gly domain; the sequence is GPIHGKDGMFCGIELLEPNGKHDGTFQGVSYFIATPYHGIFAP. 2 disordered regions span residues 90–131 and 264–548; these read EELP…VMST and LPND…SRLQ. A compositionally biased stretch (polar residues) spans 268–281; the sequence is LNANFSNKNSTTTF. Basic and acidic residues predominate over residues 285 to 295; the sequence is ETPKVEIRENG. A compositionally biased stretch (polar residues) spans 296 to 309; that stretch reads NLDNSIETPPQQSP. Composition is skewed to basic and acidic residues over residues 317 to 353, 383 to 396, 409 to 424, and 463 to 473; these read HESDSSSKKDDTKSDKSPTKKSQKMEEKPVVKKKEEP, IEAEKTKPKKEIKS, PQKENKEGGEMTETPR, and AKERVEKEKKI. Low complexity predominate over residues 492 to 501; it reads SSIPSTSSAS. 2 coiled-coil regions span residues 566-740 and 773-800; these read EDNE…VDEI and QQIEDLRRKQIHDEEEKEAMKRSFDLMQ. 2 disordered regions span residues 819–866 and 916–937; these read MESR…DSMN and PTIKSESSRIGNTSDSGIGLVM. Over residues 832-844 the composition is skewed to low complexity; sequence RSRSSASGSRPIS. Residues 845–858 are compositionally biased toward polar residues; that stretch reads MATSNGGDQRLSTS.

This chain is CAP-Gly domain-containing linker protein 1 homolog, found in Caenorhabditis elegans.